Here is a 422-residue protein sequence, read N- to C-terminus: Adenylosuccinate synthetase (422 aa).

Residues 11 to 17 and 39 to 41 contribute to the GTP site; these read GDEGKGK and GHT. Aspartate 12 acts as the Proton acceptor in catalysis. Positions 12 and 39 each coordinate Mg(2+). IMP contacts are provided by residues 12–15, 37–40, threonine 129, arginine 143, asparagine 219, threonine 234, and arginine 298; these read DEGK and NAGH. Histidine 40 (proton donor) is an active-site residue. 294–300 contributes to the substrate binding site; sequence VTTGRKR. Residues arginine 300, 326-328, and 411-413 each bind GTP; these read KLD and GTG.

Belongs to the adenylosuccinate synthetase family. In terms of assembly, homodimer. The cofactor is Mg(2+).

It is found in the cytoplasm. The catalysed reaction is IMP + L-aspartate + GTP = N(6)-(1,2-dicarboxyethyl)-AMP + GDP + phosphate + 2 H(+). Its pathway is purine metabolism; AMP biosynthesis via de novo pathway; AMP from IMP: step 1/2. Its function is as follows. Plays an important role in the de novo pathway and in the salvage pathway of purine nucleotide biosynthesis. Catalyzes the first committed step in the biosynthesis of AMP from IMP. This Talaromyces stipitatus (strain ATCC 10500 / CBS 375.48 / QM 6759 / NRRL 1006) (Penicillium stipitatum) protein is Adenylosuccinate synthetase.